Consider the following 40-residue polypeptide: MKVRNSLRALKARPGAQVVRRRGVTYVINKKDPRFKARQG.

It belongs to the bacterial ribosomal protein bL36 family.

This Streptomyces coelicolor (strain ATCC BAA-471 / A3(2) / M145) protein is Large ribosomal subunit protein bL36B.